Here is a 338-residue protein sequence, read N- to C-terminus: MLVLINTIQEQASEAIKQATDIVALEQIRVDFLGKKGKLTELLKGLANLSAEEKPKVGQLVNQAKQGISALIETKMIELKEKQLLAKLAAEQIDVTLPGRNHSTGSLHPVTQVKHRINDYFSRLGFDIVEGPEIETEFYNFEALNIPGHHPARAMHDTFYFGDGRLLRTHTSPVQIRTMEQRKPPFRLIAPGRVYRCDSDVTHTPMFHQVEGLLIDKQATLAGLKGLLQDFFAYFFGRELALRFRPSYFPFTEPSAEVDIECTQCNGKGCRSCKFTGWLEVLGCGMVHPNVLIAVNIDPNEYHGWAFGMGMDRLAMLYYGIDDLRMLFENDLTFLRQF.

Glu-253 contacts Mg(2+).

Belongs to the class-II aminoacyl-tRNA synthetase family. Phe-tRNA synthetase alpha subunit type 1 subfamily. As to quaternary structure, tetramer of two alpha and two beta subunits. Mg(2+) is required as a cofactor.

It is found in the cytoplasm. The catalysed reaction is tRNA(Phe) + L-phenylalanine + ATP = L-phenylalanyl-tRNA(Phe) + AMP + diphosphate + H(+). The polypeptide is Phenylalanine--tRNA ligase alpha subunit (Legionella pneumophila (strain Paris)).